The following is a 450-amino-acid chain: Bifunctional protein GlmU (450 aa).

The interval 1-217 (MKTLILAAGL…VDEITGVNNR (217 aa)) is pyrophosphorylase. UDP-N-acetyl-alpha-D-glucosamine-binding positions include 6–9 (LAAG), lysine 20, glutamine 68, 73–74 (GT), 95–97 (YGD), glycine 134, glutamate 146, asparagine 161, and asparagine 215. Position 97 (aspartate 97) interacts with Mg(2+). Position 215 (asparagine 215) interacts with Mg(2+). The tract at residues 218–238 (IQLANLEKKIRRKINEKLMNQ) is linker. The tract at residues 239–450 (GVRIIDPNAV…GGQKNANNKK (212 aa)) is N-acetyltransferase. 2 residues coordinate UDP-N-acetyl-alpha-D-glucosamine: arginine 320 and lysine 338. Catalysis depends on histidine 350, which acts as the Proton acceptor. Positions 353 and 364 each coordinate UDP-N-acetyl-alpha-D-glucosamine. Acetyl-CoA is bound by residues alanine 367, 373 to 374 (NY), serine 392, alanine 410, and arginine 427.

In the N-terminal section; belongs to the N-acetylglucosamine-1-phosphate uridyltransferase family. It in the C-terminal section; belongs to the transferase hexapeptide repeat family. As to quaternary structure, homotrimer. Mg(2+) is required as a cofactor.

The protein localises to the cytoplasm. It carries out the reaction alpha-D-glucosamine 1-phosphate + acetyl-CoA = N-acetyl-alpha-D-glucosamine 1-phosphate + CoA + H(+). It catalyses the reaction N-acetyl-alpha-D-glucosamine 1-phosphate + UTP + H(+) = UDP-N-acetyl-alpha-D-glucosamine + diphosphate. It participates in nucleotide-sugar biosynthesis; UDP-N-acetyl-alpha-D-glucosamine biosynthesis; N-acetyl-alpha-D-glucosamine 1-phosphate from alpha-D-glucosamine 6-phosphate (route II): step 2/2. It functions in the pathway nucleotide-sugar biosynthesis; UDP-N-acetyl-alpha-D-glucosamine biosynthesis; UDP-N-acetyl-alpha-D-glucosamine from N-acetyl-alpha-D-glucosamine 1-phosphate: step 1/1. The protein operates within bacterial outer membrane biogenesis; LPS lipid A biosynthesis. Catalyzes the last two sequential reactions in the de novo biosynthetic pathway for UDP-N-acetylglucosamine (UDP-GlcNAc). The C-terminal domain catalyzes the transfer of acetyl group from acetyl coenzyme A to glucosamine-1-phosphate (GlcN-1-P) to produce N-acetylglucosamine-1-phosphate (GlcNAc-1-P), which is converted into UDP-GlcNAc by the transfer of uridine 5-monophosphate (from uridine 5-triphosphate), a reaction catalyzed by the N-terminal domain. This chain is Bifunctional protein GlmU, found in Thermosipho melanesiensis (strain DSM 12029 / CIP 104789 / BI429).